A 202-amino-acid chain; its full sequence is Cilia- and flagella-associated protein 418 (202 aa).

The disordered stretch occupies residues 71–90 (DVDTPTSTHEPSPAKASSSA). Residues 74–90 (TPTSTHEPSPAKASSSA) are compositionally biased toward polar residues.

Ubiquitously expressed during early development and in adult tissues including the eye, brain, heart and kidney.

It is found in the cytoplasm. The protein resides in the photoreceptor inner segment. In terms of biological role, may be involved in photoreceptor outer segment disk morphogenesis. The sequence is that of Cilia- and flagella-associated protein 418 (cfap418) from Danio rerio (Zebrafish).